Reading from the N-terminus, the 374-residue chain is Peptide chain release factor 2 (374 aa).

At Q256 the chain carries N5-methylglutamine.

Belongs to the prokaryotic/mitochondrial release factor family. Methylated by PrmC. Methylation increases the termination efficiency of RF2.

The protein localises to the cytoplasm. Functionally, peptide chain release factor 2 directs the termination of translation in response to the peptide chain termination codons UGA and UAA. The protein is Peptide chain release factor 2 of Mycobacterium leprae (strain Br4923).